The following is a 202-amino-acid chain: Glycerol-3-phosphate acyltransferase (202 aa).

Helical transmembrane passes span 3 to 23 (NLIIYAFIYLLGSISFGLILT), 61 to 81 (IATIILDFAKAAIPLLILKFL), 87 to 107 (LLWSVAVLAIFGHCFSIYLLF), 117 to 137 (AGAMIVLLPLEVLTAFIVWAV), 144 to 164 (ISSLASLAALLAFIVSSFIFN), and 167 to 187 (LEIHTHAPVFIIAFIIVYKHL).

This sequence belongs to the PlsY family. Probably interacts with PlsX.

The protein resides in the cell inner membrane. It carries out the reaction an acyl phosphate + sn-glycerol 3-phosphate = a 1-acyl-sn-glycero-3-phosphate + phosphate. Its pathway is lipid metabolism; phospholipid metabolism. Functionally, catalyzes the transfer of an acyl group from acyl-phosphate (acyl-PO(4)) to glycerol-3-phosphate (G3P) to form lysophosphatidic acid (LPA). This enzyme utilizes acyl-phosphate as fatty acyl donor, but not acyl-CoA or acyl-ACP. This chain is Glycerol-3-phosphate acyltransferase, found in Campylobacter jejuni subsp. doylei (strain ATCC BAA-1458 / RM4099 / 269.97).